The sequence spans 191 residues: Apoptosis regulator BHRF1 (191 aa).

Positions 1-18 (MAYSTREILLALCIRDSR) are interaction with host VRK2. An N-linked (GlcNAc...) asparagine; by host glycan is attached at Asn-22. The BH1 motif lies at 89–109 (EIFHRGDPSLGRALAWMAWCM). Positions 89–142 (EIFHRGDPSLGRALAWMAWCMHACRTLCCNQSTPYYVVDLSVRGMLEASEGLDG) are interaction with host VRK2. Asn-118 carries N-linked (GlcNAc...) asparagine; by host glycosylation. The short motif at 142-157 (GWIHQQGGWSTLIEDN) is the BH2 element. Residues 166–186 (WTLFLAGLTLSLLVICSYLFI) form a helical membrane-spanning segment.

Belongs to the Bcl-2 family. Interacts with isoform 1 of host VRK2; this interaction is involved in protecting cells from apoptosis. Interacts with host PRA1; this interaction seems to modulate BHRF1 anti-apoptotic activity. Interacts with host BCL2L11. Interacts with host BAD and BBC3. Interacts with BALF1; BALF1 acting as a negative regulator of the survival function of BHRF1. Interacts with host BECN1.

The protein resides in the host membrane. It localises to the host mitochondrion. Its function is as follows. Prevents premature death of the host cell during virus production, which would otherwise reduce the amount of progeny virus. Acts as a host B-cell leukemia/lymphoma 2 (Bcl-2) homolog, and interacts with pro-apoptotic proteins to prevent mitochondria permeabilization, release of cytochrome c and subsequent apoptosis of the host cell. In addition, plays a role in the inhibiton of host BECN1-mediated starvation-induced autophagy without affecting basal levels of autophagy. The polypeptide is Apoptosis regulator BHRF1 (Homo sapiens (Human)).